Consider the following 179-residue polypeptide: CASP-like protein 5A2 (179 aa).

At 1 to 54 (MEATSHPAVHPVAVPPQFQGAGPPAIQMKDFPGSPGTAGGLALRFTQFGFSLIS) the chain is on the cytoplasmic side. 2 helical membrane-spanning segments follow: residues 55-75 (LCIMVSIAGFSSVTAFCFLVA) and 76-96 (TMVFQCIWSLCLGALDIYALL). At 97–114 (TQRSFRNPLIVSLFVVGD) the chain is on the cytoplasmic side. A helical membrane pass occupies residues 115–135 (WVTSTMTFAGACAAAGITVLI). Over 136–154 (DNDLEQCGPNHCGRFEAAA) the chain is Extracellular. The helical transmembrane segment at 155 to 175 (AMAFMSWTATTLSFCLSFWLL) threads the bilayer. The Cytoplasmic portion of the chain corresponds to 176–179 (ASCR).

This sequence belongs to the Casparian strip membrane proteins (CASP) family. In terms of assembly, homodimer and heterodimers.

It localises to the cell membrane. This Physcomitrium patens (Spreading-leaved earth moss) protein is CASP-like protein 5A2.